We begin with the raw amino-acid sequence, 630 residues long: Sodium-dependent serotonin transporter (630 aa).

Over 1 to 87 (METTALNSQK…ERETWGKKVD (87 aa)) the chain is Cytoplasmic. A Phosphotyrosine modification is found at Tyr47. A helical membrane pass occupies residues 88–112 (FLLSVIGYAVDLGNIWRFPYVCYQN). Residues Gly94, Ala96, Val97, Asp98, and Asn101 each coordinate Na(+). Asp98 is a serotonin binding site. Residues 113 to 115 (GGG) are Extracellular-facing. A helical transmembrane segment spans residues 116-135 (AFLLPYIIMAIFGGIPLFYM). Residues 136 to 160 (ELALGQYHRNGCISIWRKICPIFKG) are Cytoplasmic-facing. Tyr142 carries the phosphotyrosine modification. Residues 161 to 186 (IGYTICIIAFYIASYYNTIIAWALYY) traverse the membrane as a helical segment. Residues 187-252 (LISSFTDRLP…KGLQDVGGVS (66 aa)) lie on the Extracellular side of the membrane. Cys200 and Cys209 are disulfide-bonded. 2 N-linked (GlcNAc...) asparagine glycosylation sites follow: Asn208 and Asn217. The chain crosses the membrane as a helical span at residues 253–271 (WQLTLCIMLIFTIIYFSIW). Residues 272 to 277 (KGVKTS) lie on the Cytoplasmic side of the membrane. Thr276 carries the phosphothreonine modification. The chain crosses the membrane as a helical span at residues 278 to 297 (GKVVWVTATFPYIVLSVLLV). Topologically, residues 298 to 324 (RGATLPGAWKGVLFYLKPNWQKLLETG) are extracellular. A helical transmembrane segment spans residues 325-347 (VWIDAAAQIFFSLGPGFGVLLAF). Ser336 contacts Na(+). Residues 348 to 360 (ASYNKFNNNCYQD) lie on the Cytoplasmic side of the membrane. Residues 361–380 (ALVTSAVNCMTSFVSGFVIF) traverse the membrane as a helical segment. A Na(+)-binding site is contributed by Asn368. At 381–421 (TVLGYMAEMRSEDVSEVAKDAGPSLLFITYAEAIANMPAST) the chain is on the extracellular side. Residues 422 to 443 (FFAIIFFLMLITLGLDSTFAGL) traverse the membrane as a helical segment. Na(+)-binding residues include Leu434, Asp437, and Ser438. Position 439 (Thr439) interacts with serotonin. Residues 444 to 463 (EGVITAVLDEFPHIWAKHRE) are Cytoplasmic-facing. The helical transmembrane segment at 464–483 (WFVLAVVITCFFGSLTTLTF) threads the bilayer. Topologically, residues 484-494 (GGAYVVKLLEE) are extracellular. Residues Glu494 and Tyr495 each contribute to the serotonin site. The helical transmembrane segment at 495 to 516 (YATGPAVLTVVFIEAIAVSWFY) threads the bilayer. Over 517–538 (GVTQFCSDVKEMLGFSPGWFWR) the chain is Cytoplasmic. A helical transmembrane segment spans residues 539–558 (ICWVAVSPVFLLFIICSFLM). Phe556 and Ser559 together coordinate serotonin. Topologically, residues 559–574 (SPPQLRLFQYSYPHWS) are extracellular. A helical membrane pass occupies residues 575–595 (VILGYCIGTSSVICIPTYITY). The Cytoplasmic portion of the chain corresponds to 596-630 (RLVTTPGTLKERIIKSITPETPTEIPCGDICLNAV). Residues 616 to 624 (TPTEIPCGD) are interaction with RAB4A.

It belongs to the sodium:neurotransmitter symporter (SNF) (TC 2.A.22) family. SLC6A4 subfamily. In terms of assembly, monomer or homooligomer. Interacts (via C-terminus) with SCAMP2; the interaction is direct and retains transporter molecules intracellularly. Interacts with filamentous actin and STX1A. Interacts (via the N-terminus) with STX1A (via the H3 domain); this interaction regulates SLC4A6 channel conductance. Interacts with SEC23A, SEC24C and PATJ. Interacts with NOS1; the interaction may diminish the cell surface localization of SERT in the brain and, correspondingly, reduce serotonin reuptake. Interacts with TGFB1I1. Interacts with ITGAV:ITGB3. Interacts (via C-terminus) with ITGB3; this interaction regulates SLC6A4 trafficking. Phosphorylation at Thr-276 increases 5-HT uptake and is required for cGMP-mediated SERT regulation. As to expression, expressed in the intestinal crypt epithelial cells (at protein level).

Its subcellular location is the cell membrane. It is found in the endomembrane system. The protein localises to the endosome membrane. The protein resides in the synapse. It localises to the cell junction. Its subcellular location is the focal adhesion. It is found in the cell projection. The protein localises to the neuron projection. The catalysed reaction is serotonin(out) + K(+)(in) + Na(+)(out) + H(+)(in) = serotonin(in) + K(+)(out) + Na(+)(in) + H(+)(out). In terms of biological role, serotonin transporter that cotransports serotonin with one Na(+) ion in exchange for one K(+) ion and possibly one proton in an overall electroneutral transport cycle. Transports serotonin across the plasma membrane from the extracellular compartment to the cytosol thus limiting serotonin intercellular signaling. Essential for serotonin homeostasis in the central nervous system. In the developing somatosensory cortex, acts in glutamatergic neurons to control serotonin uptake and its trophic functions accounting for proper spatial organization of cortical neurons and elaboration of sensory circuits. In the mature cortex, acts primarily in brainstem raphe neurons to mediate serotonin uptake from the synaptic cleft back into the pre-synaptic terminal thus terminating serotonin signaling at the synapse. Modulates mucosal serotonin levels in the gastrointestinal tract through uptake and clearance of serotonin in enterocytes. Required for enteric neurogenesis and gastrointestinal reflexes. Regulates blood serotonin levels by ensuring rapid high affinity uptake of serotonin from plasma to platelets, where it is further stored in dense granules via vesicular monoamine transporters and then released upon stimulation. Mechanistically, the transport cycle starts with an outward-open conformation having Na1(+) and Cl(-) sites occupied. The binding of a second extracellular Na2(+) ion and serotonin substrate leads to structural changes to outward-occluded to inward-occluded to inward-open, where the Na2(+) ion and serotonin are released into the cytosol. Binding of intracellular K(+) ion induces conformational transitions to inward-occluded to outward-open and completes the cycle by releasing K(+) possibly together with a proton bound to Asp-98 into the extracellular compartment. Na1(+) and Cl(-) ions remain bound throughout the transport cycle. Additionally, displays serotonin-induced channel-like conductance for monovalent cations, mainly Na(+) ions. The channel activity is uncoupled from the transport cycle and may contribute to the membrane resting potential or excitability. This chain is Sodium-dependent serotonin transporter (SLC6A4), found in Cavia porcellus (Guinea pig).